A 327-amino-acid chain; its full sequence is Probable cell division protein WhiA (327 aa).

A DNA-binding region (H-T-H motif) is located at residues 277–310 (EELGRLADPPMTKDAVAGRIRRLLSMADRKAKQD). The interval 304 to 327 (DRKAKQDGIPDTESAVTPDLLEDA) is disordered.

The protein belongs to the WhiA family.

Its function is as follows. Involved in cell division and chromosome segregation. This chain is Probable cell division protein WhiA, found in Mycolicibacterium vanbaalenii (strain DSM 7251 / JCM 13017 / BCRC 16820 / KCTC 9966 / NRRL B-24157 / PYR-1) (Mycobacterium vanbaalenii).